We begin with the raw amino-acid sequence, 398 residues long: Elongation factor Tu (398 aa).

One can recognise a tr-type G domain in the interval 10–207 (KPHVNIGTIG…TADEYIPEPE (198 aa)). Residues 19–26 (GHVDHGKT) form a G1 region. 19 to 26 (GHVDHGKT) provides a ligand contact to GTP. Threonine 26 contributes to the Mg(2+) binding site. Residues 63 to 67 (GITIN) are G2. Positions 84-87 (DAPG) are G3. GTP contacts are provided by residues 84-88 (DAPGH) and 139-142 (NKID). The tract at residues 139 to 142 (NKID) is G4. The segment at 177-179 (SAL) is G5.

The protein belongs to the TRAFAC class translation factor GTPase superfamily. Classic translation factor GTPase family. EF-Tu/EF-1A subfamily. As to quaternary structure, monomer.

It is found in the cytoplasm. The enzyme catalyses GTP + H2O = GDP + phosphate + H(+). GTP hydrolase that promotes the GTP-dependent binding of aminoacyl-tRNA to the A-site of ribosomes during protein biosynthesis. The polypeptide is Elongation factor Tu (Streptococcus uberis (strain ATCC BAA-854 / 0140J)).